We begin with the raw amino-acid sequence, 186 residues long: Phosphoheptose isomerase (186 aa).

Residues 33-186 (LCECLKKGGK…TLCQIIDEGF (154 aa)) form the SIS domain. 48–50 (NGG) provides a ligand contact to substrate. Zn(2+)-binding residues include H57 and E61. Residues E61, 90–91 (ND), 116–118 (STS), S121, and Q168 contribute to the substrate site. Zn(2+)-binding residues include Q168 and H176.

It belongs to the SIS family. GmhA subfamily. In terms of assembly, homotetramer. Requires Zn(2+) as cofactor.

The protein resides in the cytoplasm. The catalysed reaction is 2 D-sedoheptulose 7-phosphate = D-glycero-alpha-D-manno-heptose 7-phosphate + D-glycero-beta-D-manno-heptose 7-phosphate. The protein operates within carbohydrate biosynthesis; D-glycero-D-manno-heptose 7-phosphate biosynthesis; D-glycero-alpha-D-manno-heptose 7-phosphate and D-glycero-beta-D-manno-heptose 7-phosphate from sedoheptulose 7-phosphate: step 1/1. Catalyzes the isomerization of sedoheptulose 7-phosphate in D-glycero-D-manno-heptose 7-phosphate. The sequence is that of Phosphoheptose isomerase from Campylobacter jejuni subsp. jejuni serotype O:6 (strain 81116 / NCTC 11828).